The chain runs to 391 residues: GTPase Obg (391 aa).

The 159-residue stretch at 1–159 folds into the Obg domain; it reads MKFVDEASIL…RDLLLELMLL (159 aa). The segment at 127–147 is disordered; sequence NTRFKSSVNRTPRQKTNGTPG. The span at 129-145 shows a compositional bias: polar residues; sequence RFKSSVNRTPRQKTNGT. One can recognise an OBG-type G domain in the interval 160–333; sequence ADVGMLGMPN…LCWDVMTFII (174 aa). GTP contacts are provided by residues 166–173, 191–195, 213–216, 283–286, and 314–316; these read GMPNAGKS, FTTLV, DIPG, NKID, and SAA. Residues serine 173 and threonine 193 each coordinate Mg(2+).

It belongs to the TRAFAC class OBG-HflX-like GTPase superfamily. OBG GTPase family. As to quaternary structure, monomer. Mg(2+) is required as a cofactor.

The protein resides in the cytoplasm. Functionally, an essential GTPase which binds GTP, GDP and possibly (p)ppGpp with moderate affinity, with high nucleotide exchange rates and a fairly low GTP hydrolysis rate. Plays a role in control of the cell cycle, stress response, ribosome biogenesis and in those bacteria that undergo differentiation, in morphogenesis control. The sequence is that of GTPase Obg from Salmonella arizonae (strain ATCC BAA-731 / CDC346-86 / RSK2980).